Consider the following 559-residue polypeptide: Formate--tetrahydrofolate ligase (559 aa).

68–75 (TPAGEGKS) serves as a coordination point for ATP.

Belongs to the formate--tetrahydrofolate ligase family.

The catalysed reaction is (6S)-5,6,7,8-tetrahydrofolate + formate + ATP = (6R)-10-formyltetrahydrofolate + ADP + phosphate. It participates in one-carbon metabolism; tetrahydrofolate interconversion. This is Formate--tetrahydrofolate ligase from Lactobacillus gasseri (strain ATCC 33323 / DSM 20243 / BCRC 14619 / CIP 102991 / JCM 1131 / KCTC 3163 / NCIMB 11718 / NCTC 13722 / AM63).